We begin with the raw amino-acid sequence, 2190 residues long: Voltage-dependent L-type calcium channel subunit alpha-1D (2190 aa).

Over residues M1–E10 the composition is skewed to low complexity. Disordered stretches follow at residues M1–T44 and Q57–R96. At M1 to K121 the chain is on the cytoplasmic side. Composition is skewed to polar residues over residues P31–T44 and N63–S76. The span at Q77–K88 shows a compositional bias: basic residues. The stretch at N108 to F404 is one I repeat. The chain crosses the membrane as a helical span at residues P122–V140. Residues Y141–K158 lie on the Extracellular side of the membrane. Residue N150 is glycosylated (N-linked (GlcNAc...) asparagine). The helical transmembrane segment at V159–Y178 threads the bilayer. Residues G179 to N190 are Cytoplasmic-facing. The helical transmembrane segment at G191–L209 threads the bilayer. The Extracellular segment spans residues E210–D230. A helical membrane pass occupies residues V231–V249. The Cytoplasmic segment spans residues P250–H268. Residues I269–F288 form a helical membrane-spanning segment. The Extracellular segment spans residues I289–W376. A glycan (N-linked (GlcNAc...) asparagine) is linked at N324. E359 serves as a coordination point for Ca(2+). A helical transmembrane segment spans residues P377–S401. Residues G402–V544 lie on the Cytoplasmic side of the membrane. A binding to the beta subunit region spans residues Q424–E441. Positions G478 to V500 are disordered. An II repeat occupies N530–L776. The helical transmembrane segment at T545–E564 threads the bilayer. At H565–A579 the chain is on the extracellular side. Residues N580 to L598 form a helical membrane-spanning segment. Topologically, residues G599–S606 are cytoplasmic. A helical transmembrane segment spans residues L607–L625. Residues V626–G635 are Extracellular-facing. Residues I636–W654 form a helical membrane-spanning segment. Residues A655–S673 are Cytoplasmic-facing. A helical transmembrane segment spans residues L674–G694. The Extracellular portion of the chain corresponds to G695–I748. Residue E726 participates in Ca(2+) binding. A helical transmembrane segment spans residues V749–V773. At D774 to H907 the chain is on the cytoplasmic side. Basic and acidic residues predominate over residues K787–K823. Residues K787–I869 are disordered. A compositionally biased stretch (acidic residues) spans V847–E859. An III repeat occupies N894 to F1176. The helical transmembrane segment at I908–A926 threads the bilayer. The Extracellular segment spans residues E927 to Y942. The chain crosses the membrane as a helical span at residues A943–F962. Residues G963–N974 lie on the Cytoplasmic side of the membrane. Residues Y975 to I993 traverse the membrane as a helical segment. Topologically, residues Q994–S999 are extracellular. The helical transmembrane segment at V1000–A1019 threads the bilayer. Over K1020–N1038 the chain is Cytoplasmic. Residues I1039–F1058 form a helical membrane-spanning segment. The Extracellular segment spans residues K1059–E1148. The tract at residues R1096 to N1186 is dihydropyridine binding. E1122 is a Ca(2+) binding site. A helical membrane pass occupies residues I1149 to V1169. Over G1170–T1226 the chain is Cytoplasmic. The stretch at N1213–F1496 is one IV repeat. Residues G1227 to M1245 form a helical membrane-spanning segment. Residues Q1246–I1260 lie on the Extracellular side of the membrane. The helical transmembrane segment at M1261 to F1280 threads the bilayer. At K1281–S1297 the chain is on the cytoplasmic side. The chain crosses the membrane as a helical span at residues D1298 to E1319. The Extracellular segment spans residues A1320–I1342. The helical transmembrane segment at S1343 to G1362 threads the bilayer. Residues E1363–Y1381 lie on the Cytoplasmic side of the membrane. The helical transmembrane segment at V1382–F1401 threads the bilayer. The Extracellular segment spans residues G1402 to F1468. The segment at R1449–K1515 is dihydropyridine binding. Residues E1461 to S1504 form a phenylalkylamine binding region. Residues A1469–M1493 traverse the membrane as a helical segment. Residues D1494–L2190 are Cytoplasmic-facing. 4 disordered regions span residues T1736 to L1787, F1803 to T1833, H1917 to F1952, and S1995 to Y2025. Residues S1805–E1823 are compositionally biased toward basic and acidic residues. Residues K1824–T1833 show a composition bias toward basic residues.

It belongs to the calcium channel alpha-1 subunit (TC 1.A.1.11) family. CACNA1D subfamily. In terms of assembly, voltage-dependent calcium channels are multisubunit complexes, consisting of alpha-1, alpha-2, beta and delta subunits in a 1:1:1:1 ratio. The channel activity is directed by the pore-forming and voltage-sensitive alpha-1 subunit. In many cases, this subunit is sufficient to generate voltage-sensitive calcium channel activity. The auxiliary subunits beta and alpha-2/delta linked by a disulfide bridge regulate the channel activity. Interacts with RIMBP2. As to expression, expressed in the basilar papilla of the cochlea.

Its subcellular location is the membrane. The enzyme catalyses Ca(2+)(in) = Ca(2+)(out). In terms of biological role, the isoform alpha-1D gives rise to L-type calcium currents. Long-lasting (L-type) calcium channels belong to the 'high-voltage activated' (HVA) group. The protein is Voltage-dependent L-type calcium channel subunit alpha-1D (CACNA1D) of Gallus gallus (Chicken).